A 247-amino-acid chain; its full sequence is Ubiquinone biosynthesis O-methyltransferase (247 aa).

4 residues coordinate S-adenosyl-L-methionine: Arg41, Gly72, Asp93, and Met136.

This sequence belongs to the methyltransferase superfamily. UbiG/COQ3 family.

It catalyses the reaction a 3-demethylubiquinol + S-adenosyl-L-methionine = a ubiquinol + S-adenosyl-L-homocysteine + H(+). The enzyme catalyses a 3-(all-trans-polyprenyl)benzene-1,2-diol + S-adenosyl-L-methionine = a 2-methoxy-6-(all-trans-polyprenyl)phenol + S-adenosyl-L-homocysteine + H(+). It functions in the pathway cofactor biosynthesis; ubiquinone biosynthesis. In terms of biological role, O-methyltransferase that catalyzes the 2 O-methylation steps in the ubiquinone biosynthetic pathway. This chain is Ubiquinone biosynthesis O-methyltransferase, found in Bartonella quintana (strain Toulouse) (Rochalimaea quintana).